Consider the following 211-residue polypeptide: Thymidylate kinase (211 aa).

11–18 serves as a coordination point for ATP; the sequence is GPDGAGKT.

It belongs to the thymidylate kinase family.

The enzyme catalyses dTMP + ATP = dTDP + ADP. In terms of biological role, phosphorylation of dTMP to form dTDP in both de novo and salvage pathways of dTTP synthesis. In Streptococcus pyogenes serotype M1, this protein is Thymidylate kinase.